Consider the following 479-residue polypeptide: Cardiolipin synthase A (479 aa).

Helical transmembrane passes span 8 to 28 and 38 to 58; these read LLAY…IHAV and IAWA…YLIF. PLD phosphodiesterase domains are found at residues 218-245 and 392-419; these read VNFR…GDEY and TPGF…DNRS. Active-site residues include His223, Lys225, Asp230, His397, Lys399, and Asp404.

This sequence belongs to the phospholipase D family. Cardiolipin synthase subfamily. ClsA sub-subfamily.

It localises to the cell inner membrane. It carries out the reaction 2 a 1,2-diacyl-sn-glycero-3-phospho-(1'-sn-glycerol) = a cardiolipin + glycerol. In terms of biological role, catalyzes the reversible phosphatidyl group transfer from one phosphatidylglycerol molecule to another to form cardiolipin (CL) (diphosphatidylglycerol) and glycerol. In Pseudomonas fluorescens (strain SBW25), this protein is Cardiolipin synthase A.